Here is an 88-residue protein sequence, read N- to C-terminus: LYR motif-containing protein 2 (88 aa).

The transit peptide at 1–19 directs the protein to the mitochondrion; that stretch reads MAASRLPPATLTLKQFVRR.

The protein belongs to the complex I LYR family.

It is found in the mitochondrion. In terms of biological role, involved in efficient integration of the N-module into mitochondrial respiratory chain complex I. The protein is LYR motif-containing protein 2 (LYRM2) of Homo sapiens (Human).